A 426-amino-acid chain; its full sequence is Serine--tRNA ligase (426 aa).

231–233 (TAE) is a binding site for L-serine. An ATP-binding site is contributed by 262–264 (RSE). Residue glutamate 285 participates in L-serine binding. Position 349 to 352 (349 to 352 (EISS)) interacts with ATP. L-serine is bound at residue serine 384.

Belongs to the class-II aminoacyl-tRNA synthetase family. Type-1 seryl-tRNA synthetase subfamily. In terms of assembly, homodimer. The tRNA molecule binds across the dimer.

The protein resides in the cytoplasm. The catalysed reaction is tRNA(Ser) + L-serine + ATP = L-seryl-tRNA(Ser) + AMP + diphosphate + H(+). The enzyme catalyses tRNA(Sec) + L-serine + ATP = L-seryl-tRNA(Sec) + AMP + diphosphate + H(+). Its pathway is aminoacyl-tRNA biosynthesis; selenocysteinyl-tRNA(Sec) biosynthesis; L-seryl-tRNA(Sec) from L-serine and tRNA(Sec): step 1/1. Its function is as follows. Catalyzes the attachment of serine to tRNA(Ser). Is also able to aminoacylate tRNA(Sec) with serine, to form the misacylated tRNA L-seryl-tRNA(Sec), which will be further converted into selenocysteinyl-tRNA(Sec). The polypeptide is Serine--tRNA ligase (Laribacter hongkongensis (strain HLHK9)).